Here is a 139-residue protein sequence, read N- to C-terminus: Glucanase inhibitor protein 3 (139 aa).

The Peptidase S1 domain maps to 1–138; the sequence is VLTLEKPSKF…GIEWINSVIK (138 aa). Disulfide bonds link cysteine 61–cysteine 73 and cysteine 83–cysteine 114.

The protein belongs to the peptidase S1 family.

The protein localises to the secreted. Secreted effector that suppresses host plant glucan elicitor-mediated defense responses. Targets host endoglucanases and inhibits the endoglucanase-mediated release of elicitor-active glucan oligosaccharides from P.sojae cell walls. This chain is Glucanase inhibitor protein 3, found in Phytophthora sojae (Soybean stem and root rot agent).